The sequence spans 748 residues: MLTRLREIVEKVASAPRLNEALNILVTDICLAMDTEVCSVYLADHDRRCYYLMATRGLKKPRGRTVALAFDEGIVGLVGRLAEPINLADAQKHPSFKYIPSVKEERFRAFLGVPIIQRRQLLGVLVVQQRELRQYDESEESFLVTLATQMAAILSQSQVTALFGQYRQTRIRALPAAPGVAIATGWQDATMPLMEQVYEASTLDTSLERERLTGALEEAANEFRRYSKRFAAGAQKETAAIFDLYSHLLSDARLRRELFAEVDKGAVAEWAVKKIIEKFAEQFAALTDNYLKERAGDLRTLGQRLLFHLDDSVQGPNAWPERFILVADELSATTLAELPQDRLAGVVVRDGAANSHAAIMVRALGIPTVMGADIQPSVLHRRTLVVDGYRGELLVDPEPVLIQEYQRLISEEIELSRLAEDDVNLPAQLKSGERVKVMLNAGLSPEHEEKLGSRIDGIGLYRTEIPFMLQSGFPSEEEQVAQYQGMLQMFNDKPVTLRTLDVGADKQLPYMPISEENPCLGWRGIRITLDQPEIFLIQVRAMLRANAATGNLSILLPMVTSIDEVDEARRLIERAGREVEEMIGYAIPKPRIGIMLEVPSMVFMLPHLANRIDFISVGTNDLTQYILAVDRNNTRVASIYDSLHPAMLRALSMIAQEAEKHGLDLRLCGEMAGDPMCVAILIGLGYRHLSMNGRSVARVKYLLRHIDFEDAQTLARRSLEAQMATEVRHQVAAFMERRGMGGLIRGGL.

The GAF domain occupies 1 to 127 (MLTRLREIVE…RRQLLGVLVV (127 aa)). The tract at residues 128-170 (QQRELRQYDESEESFLVTLATQMAAILSQSQVTALFGQYRQTR) is linker. The segment at 171-748 (IRALPAAPGV…GMGGLIRGGL (578 aa)) is PTS EI. The active-site Tele-phosphohistidine intermediate is the histidine 356. Positions 462 and 498 each coordinate phosphoenolpyruvate. Glutamate 597 and aspartate 621 together coordinate Mg(2+). Phosphoenolpyruvate contacts are provided by residues 620-621 (ND) and arginine 631. Catalysis depends on cysteine 668, which acts as the Proton donor.

It belongs to the PEP-utilizing enzyme family. Mg(2+) is required as a cofactor.

It localises to the cytoplasm. The catalysed reaction is L-histidyl-[protein] + phosphoenolpyruvate = N(pros)-phospho-L-histidyl-[protein] + pyruvate. In terms of biological role, component of the phosphoenolpyruvate-dependent nitrogen-metabolic phosphotransferase system (nitrogen-metabolic PTS), that seems to be involved in regulating nitrogen metabolism. Enzyme I-Ntr transfers the phosphoryl group from phosphoenolpyruvate (PEP) to the phosphoryl carrier protein (NPr). Could function in the transcriptional regulation of sigma-54 dependent operons in conjunction with the NPr (PtsO) and EIIA-Ntr (PtsN) proteins. Enzyme I-Ntr is specific for NPr. The protein is Phosphoenolpyruvate-dependent phosphotransferase system (ptsP) of Salmonella typhimurium (strain LT2 / SGSC1412 / ATCC 700720).